Consider the following 179-residue polypeptide: Large ribosomal subunit protein uL5 (179 aa).

The protein belongs to the universal ribosomal protein uL5 family. In terms of assembly, part of the 50S ribosomal subunit; part of the 5S rRNA/L5/L18/L25 subcomplex. Contacts the 5S rRNA and the P site tRNA. Forms a bridge to the 30S subunit in the 70S ribosome.

Functionally, this is one of the proteins that bind and probably mediate the attachment of the 5S RNA into the large ribosomal subunit, where it forms part of the central protuberance. In the 70S ribosome it contacts protein S13 of the 30S subunit (bridge B1b), connecting the 2 subunits; this bridge is implicated in subunit movement. Contacts the P site tRNA; the 5S rRNA and some of its associated proteins might help stabilize positioning of ribosome-bound tRNAs. In Vibrio parahaemolyticus serotype O3:K6 (strain RIMD 2210633), this protein is Large ribosomal subunit protein uL5.